The sequence spans 189 residues: Probable thymidylate kinase 1 (189 aa).

9–16 is a binding site for ATP; it reads GIDGSGKT.

The protein belongs to the thymidylate kinase family.

It carries out the reaction dTMP + ATP = dTDP + ADP. The protein is Probable thymidylate kinase 1 (tmk1) of Saccharolobus solfataricus (strain ATCC 35092 / DSM 1617 / JCM 11322 / P2) (Sulfolobus solfataricus).